The primary structure comprises 344 residues: Programmed cell death protein 2 (344 aa).

Zn(2+) contacts are provided by cysteine 135, cysteine 138, cysteine 146, cysteine 149, cysteine 155, histidine 159, histidine 168, and cysteine 172. The segment at 135–172 adopts an MYND-type; atypical zinc-finger fold; the sequence is CRVCGCSGPKRCSRCHKAHYCSKEHQSLDWRLGHKQAC.

In terms of processing, ubiquitinated by PRKN, promoting proteasomal degradation.

It localises to the nucleus. Functionally, may be a DNA-binding protein with a regulatory function. May play an important role in cell death and/or in regulation of cell proliferation. This chain is Programmed cell death protein 2 (PDCD2), found in Bos taurus (Bovine).